Here is a 230-residue protein sequence, read N- to C-terminus: Large ribosomal subunit protein uL1 (230 aa).

The protein belongs to the universal ribosomal protein uL1 family. As to quaternary structure, part of the 50S ribosomal subunit.

Its function is as follows. Binds directly to 23S rRNA. The L1 stalk is quite mobile in the ribosome, and is involved in E site tRNA release. Functionally, protein L1 is also a translational repressor protein, it controls the translation of the L11 operon by binding to its mRNA. The chain is Large ribosomal subunit protein uL1 from Lactobacillus gasseri (strain ATCC 33323 / DSM 20243 / BCRC 14619 / CIP 102991 / JCM 1131 / KCTC 3163 / NCIMB 11718 / NCTC 13722 / AM63).